Reading from the N-terminus, the 558-residue chain is Laccase-4 (558 aa).

Residues 1–24 (MGSHMVWFLFLVSFFSVFPAPSES) form the signal peptide. Plastocyanin-like domains follow at residues 32-148 (NVVM…PKRG) and 158-308 (NEKV…YSGT). N-linked (GlcNAc...) asparagine glycosylation is found at Asn37 and Asn78. Cu cation contacts are provided by His82 and His84. Asn114 carries an N-linked (GlcNAc...) asparagine glycan. His127 and His129 together coordinate Cu cation. N-linked (GlcNAc...) asparagine glycans are attached at residues Asn187, Asn296, Asn323, Asn330, Asn373, Asn383, Asn400, Asn418, and Asn441. Residues 408–542 (DFPKNPPHVF…KMAFLVENGK (135 aa)) form the Plastocyanin-like 3 domain. Residues His459, His462, and His464 each contribute to the Cu cation site. N-linked (GlcNAc...) asparagine glycosylation occurs at Asn479. Residues His521, Cys522, His523, and His527 each coordinate Cu cation. The N-linked (GlcNAc...) asparagine glycan is linked to Asn545.

It belongs to the multicopper oxidase family. Requires Cu cation as cofactor. As to expression, ubiquitous, with higher levels in the inflorescence stem.

It localises to the secreted. Its subcellular location is the extracellular space. The protein localises to the apoplast. The catalysed reaction is 4 hydroquinone + O2 = 4 benzosemiquinone + 2 H2O. Functionally, lignin degradation and detoxification of lignin-derived products. Required for secondary xylem cell wall lignification. The polypeptide is Laccase-4 (IRX12) (Arabidopsis thaliana (Mouse-ear cress)).